The primary structure comprises 180 residues: NADH-quinone oxidoreductase subunit I (180 aa).

4Fe-4S ferredoxin-type domains follow at residues 50–80 (LTRD…LQKA) and 90–119 (EFFR…LTPD). Positions 60, 63, 66, 70, 99, 102, 105, and 109 each coordinate [4Fe-4S] cluster.

This sequence belongs to the complex I 23 kDa subunit family. As to quaternary structure, NDH-1 is composed of 13 different subunits. Subunits NuoA, H, J, K, L, M, N constitute the membrane sector of the complex. The cofactor is [4Fe-4S] cluster.

It localises to the cell inner membrane. It catalyses the reaction a quinone + NADH + 5 H(+)(in) = a quinol + NAD(+) + 4 H(+)(out). NDH-1 shuttles electrons from NADH, via FMN and iron-sulfur (Fe-S) centers, to quinones in the respiratory chain. The immediate electron acceptor for the enzyme in this species is believed to be ubiquinone. Couples the redox reaction to proton translocation (for every two electrons transferred, four hydrogen ions are translocated across the cytoplasmic membrane), and thus conserves the redox energy in a proton gradient. The sequence is that of NADH-quinone oxidoreductase subunit I from Pectobacterium atrosepticum (strain SCRI 1043 / ATCC BAA-672) (Erwinia carotovora subsp. atroseptica).